Reading from the N-terminus, the 323-residue chain is Small ribosomal subunit protein uS2 (323 aa).

Residues Val295 to Lys323 are disordered.

Belongs to the universal ribosomal protein uS2 family.

This chain is Small ribosomal subunit protein uS2, found in Mycoplasmoides gallisepticum (strain R(low / passage 15 / clone 2)) (Mycoplasma gallisepticum).